Here is a 225-residue protein sequence, read N- to C-terminus: ATP-dependent Clp protease proteolytic subunit (225 aa).

Ser126 acts as the Nucleophile in catalysis. His151 is a catalytic residue.

It belongs to the peptidase S14 family. Fourteen ClpP subunits assemble into 2 heptameric rings which stack back to back to give a disk-like structure with a central cavity, resembling the structure of eukaryotic proteasomes.

It is found in the cytoplasm. The enzyme catalyses Hydrolysis of proteins to small peptides in the presence of ATP and magnesium. alpha-casein is the usual test substrate. In the absence of ATP, only oligopeptides shorter than five residues are hydrolyzed (such as succinyl-Leu-Tyr-|-NHMec, and Leu-Tyr-Leu-|-Tyr-Trp, in which cleavage of the -Tyr-|-Leu- and -Tyr-|-Trp bonds also occurs).. Cleaves peptides in various proteins in a process that requires ATP hydrolysis. Has a chymotrypsin-like activity. Plays a major role in the degradation of misfolded proteins. This Psychrobacter arcticus (strain DSM 17307 / VKM B-2377 / 273-4) protein is ATP-dependent Clp protease proteolytic subunit.